A 388-amino-acid chain; its full sequence is 1-deoxy-D-xylulose 5-phosphate reductoisomerase (388 aa).

6 residues coordinate NADPH: Thr10, Gly11, Ser12, Ile13, Asn37, and Asn121. Lys122 contacts 1-deoxy-D-xylulose 5-phosphate. Position 123 (Glu123) interacts with NADPH. Asp147 is a binding site for Mn(2+). 1-deoxy-D-xylulose 5-phosphate-binding residues include Ser148, Glu149, Ser173, and His196. A Mn(2+)-binding site is contributed by Glu149. Residue Gly202 coordinates NADPH. 1-deoxy-D-xylulose 5-phosphate is bound by residues Ser209, Asn214, Lys215, and Glu218. Glu218 is a binding site for Mn(2+).

It belongs to the DXR family. The cofactor is Mg(2+). Mn(2+) serves as cofactor.

It catalyses the reaction 2-C-methyl-D-erythritol 4-phosphate + NADP(+) = 1-deoxy-D-xylulose 5-phosphate + NADPH + H(+). It functions in the pathway isoprenoid biosynthesis; isopentenyl diphosphate biosynthesis via DXP pathway; isopentenyl diphosphate from 1-deoxy-D-xylulose 5-phosphate: step 1/6. Its function is as follows. Catalyzes the NADPH-dependent rearrangement and reduction of 1-deoxy-D-xylulose-5-phosphate (DXP) to 2-C-methyl-D-erythritol 4-phosphate (MEP). The protein is 1-deoxy-D-xylulose 5-phosphate reductoisomerase of Lachnoclostridium phytofermentans (strain ATCC 700394 / DSM 18823 / ISDg) (Clostridium phytofermentans).